Reading from the N-terminus, the 173-residue chain is MRLFLAIDIPENIKEEIAKFQEQFKMKGIKLVEKENLHITVKFLGEVDEEKLKEILNLDLSIQPIKIKLKYIGTFPNSNYIRVIWIGAYNNNLVEIFKEIDEKLSNLGFKKEREYVPHLTIGRVKFIDNKKKLKDRIEKYKDVDFGEFEAKHIKLYKSTLTPNGPIYEVIKEW.

The Proton donor role is filled by histidine 38. 2 short sequence motifs (HXTX) span residues 38-41 and 118-121; these read HITV and HLTI. Histidine 118 functions as the Proton acceptor in the catalytic mechanism.

This sequence belongs to the 2H phosphoesterase superfamily. ThpR family.

It catalyses the reaction a 3'-end 2',3'-cyclophospho-ribonucleotide-RNA + H2O = a 3'-end 2'-phospho-ribonucleotide-RNA + H(+). Functionally, hydrolyzes RNA 2',3'-cyclic phosphodiester to an RNA 2'-phosphomonoester. This is RNA 2',3'-cyclic phosphodiesterase from Methanocaldococcus jannaschii (strain ATCC 43067 / DSM 2661 / JAL-1 / JCM 10045 / NBRC 100440) (Methanococcus jannaschii).